Reading from the N-terminus, the 302-residue chain is Recombination-associated protein RdgC (302 aa).

This sequence belongs to the RdgC family.

The protein resides in the cytoplasm. The protein localises to the nucleoid. In terms of biological role, may be involved in recombination. This chain is Recombination-associated protein RdgC, found in Tolumonas auensis (strain DSM 9187 / NBRC 110442 / TA 4).